A 306-amino-acid chain; its full sequence is Ribonuclease Z (306 aa).

Positions 63, 65, 67, 68, 141, 211, and 269 each coordinate Zn(2+). Aspartate 67 functions as the Proton acceptor in the catalytic mechanism.

It belongs to the RNase Z family. Homodimer. Zn(2+) is required as a cofactor.

It catalyses the reaction Endonucleolytic cleavage of RNA, removing extra 3' nucleotides from tRNA precursor, generating 3' termini of tRNAs. A 3'-hydroxy group is left at the tRNA terminus and a 5'-phosphoryl group is left at the trailer molecule.. Its function is as follows. Zinc phosphodiesterase, which displays some tRNA 3'-processing endonuclease activity. Probably involved in tRNA maturation, by removing a 3'-trailer from precursor tRNA. This chain is Ribonuclease Z, found in Staphylococcus carnosus (strain TM300).